The chain runs to 808 residues: Protein NLP5 (808 aa).

Residues 56 to 68 (PTQDTSNSLSQMY) are compositionally biased toward polar residues. A disordered region spans residues 56 to 83 (PTQDTSNSLSQMYGQDCPERSSLEDQNQ). The RWP-RK domain occupies 536 to 617 (NRVTEKKRTK…IDSVEGVSGH (82 aa)). Residues 660-680 (SPGSSCSHSSSCSSETQVIKE) form a disordered region. The span at 663–673 (SSCSHSSSCSS) shows a compositional bias: low complexity. The region spanning 710-793 (FLRVKVSYEE…QTIKLLLQLS (84 aa)) is the PB1 domain.

The protein resides in the nucleus. Functionally, probable transcription factor. This Arabidopsis thaliana (Mouse-ear cress) protein is Protein NLP5 (NLP5).